A 212-amino-acid chain; its full sequence is Phosphoribosylglycinamide formyltransferase (212 aa).

12 to 14 (GTN) provides a ligand contact to N(1)-(5-phospho-beta-D-ribosyl)glycinamide. (6R)-10-formyltetrahydrofolate contacts are provided by residues 90–93 (MKIL) and asparagine 107. Histidine 109 functions as the Proton donor in the catalytic mechanism.

The protein belongs to the GART family.

It carries out the reaction N(1)-(5-phospho-beta-D-ribosyl)glycinamide + (6R)-10-formyltetrahydrofolate = N(2)-formyl-N(1)-(5-phospho-beta-D-ribosyl)glycinamide + (6S)-5,6,7,8-tetrahydrofolate + H(+). It participates in purine metabolism; IMP biosynthesis via de novo pathway; N(2)-formyl-N(1)-(5-phospho-D-ribosyl)glycinamide from N(1)-(5-phospho-D-ribosyl)glycinamide (10-formyl THF route): step 1/1. Functionally, catalyzes the transfer of a formyl group from 10-formyltetrahydrofolate to 5-phospho-ribosyl-glycinamide (GAR), producing 5-phospho-ribosyl-N-formylglycinamide (FGAR) and tetrahydrofolate. The polypeptide is Phosphoribosylglycinamide formyltransferase (Haemophilus influenzae (strain ATCC 51907 / DSM 11121 / KW20 / Rd)).